The primary structure comprises 213 residues: CDP-diacylglycerol--inositol 3-phosphatidyltransferase (213 aa).

The Cytoplasmic segment spans residues 1 to 5 (MPDEN). The helical transmembrane segment at 6–26 (IFLFVPNLIGYARIVFAIISF) threads the bilayer. Y27 is a topological domain (lumenal). A helical membrane pass occupies residues 28–48 (FMPCCPLTASSFYLLSGLLDA). Mg(2+)-binding residues include D47 and D50. The Cytoplasmic portion of the chain corresponds to 49-73 (FDGHAARALNQGTRFGAMLDMLTDR). A CDP-1,2-diacyl-sn-glycerol is bound by residues G51, R55, and T61. Residues D68 and D72 each contribute to the Mg(2+) site. D72 serves as the catalytic Proton acceptor. The helical transmembrane segment at 74–94 (CSTMCLLVNLALLYPGATLFF) threads the bilayer. Residue Q95 is a topological domain, lumenal. A helical transmembrane segment spans residues 96-116 (ISMSLDVASHWLHLHSSVVRG). Over 117-139 (SESHKMIDLSGNPVLRIYYTSRP) the chain is Cytoplasmic. Residues 140–160 (ALFTLCAGNELFYCLLYLFHF) form a helical membrane-spanning segment. Over 161–174 (SEGPLVGSVGLFRM) the chain is Lumenal. The helical transmembrane segment at 175-195 (GLWVTAPIALLKSLISVIHLI) threads the bilayer. Residues 196-213 (TAARNMAALDAADRAKKK) lie on the Cytoplasmic side of the membrane.

It belongs to the CDP-alcohol phosphatidyltransferase class-I family. Mn(2+) is required as a cofactor. Requires Mg(2+) as cofactor. In terms of tissue distribution, detected in placenta (at protein level). Widely expressed. Higher expression in adult liver and skeletal muscle, slightly lower levels seen in pancreas, kidney, lung, placenta, brain, heart, leukocyte, colon, small intestine, ovary, testis, prostate, thymus and spleen. In fetus, expressed in kidney, liver, lung and brain.

Its subcellular location is the endoplasmic reticulum membrane. The protein resides in the cell membrane. It carries out the reaction a CDP-1,2-diacyl-sn-glycerol + myo-inositol = a 1,2-diacyl-sn-glycero-3-phospho-(1D-myo-inositol) + CMP + H(+). Its activity is regulated as follows. Inhibited by PtdIns (product inhibition), phosphatidylinositol phosphate, and nucleoside di- and tri-phosphates. Its function is as follows. Catalyzes the biosynthesis of phosphatidylinositol (PtdIns) as well as PtdIns:inositol exchange reaction. May thus act to reduce an excessive cellular PtdIns content. The exchange activity is due to the reverse reaction of PtdIns synthase and is dependent on CMP, which is tightly bound to the enzyme. This is CDP-diacylglycerol--inositol 3-phosphatidyltransferase from Homo sapiens (Human).